The sequence spans 390 residues: MTAVSLGIPAVPPPPLAPRRASRQIMVGSVPVGGGAPVSVQSMTTTLTADVNATLQQIAELTAAGCQIVRVAVPSQDDVAALPAIARKSQLPVIADIHFQPRYVFAAIEAGCAAVRVNPGNIRQFDDKVKEIAKAAGDAGVPIRIGVNAGSLDKRLLAKHGKATAEALVESALWECSLFEEHGFRDIKISVKHNDPVVMVRAYRQLAEACDYPLHLGVTEAGPAFQGTIKSSVAFGALLAEGIGDTIRVSLSAPPVEEIKVGAAILESLGLRERGLEIVSCPSCGRAQVDVYKLAEEVTAGLEGLPVPLRVAVMGCVVNGPGEAREADLGVASGNGKGQIFVKGQVIKTVPEGQIVETLIEEALRLAEEMGAELPEELRSLAGGATVTVH.

The [4Fe-4S] cluster site is built by cysteine 281, cysteine 284, cysteine 316, and glutamate 323.

This sequence belongs to the IspG family. The cofactor is [4Fe-4S] cluster.

The enzyme catalyses (2E)-4-hydroxy-3-methylbut-2-enyl diphosphate + oxidized [flavodoxin] + H2O + 2 H(+) = 2-C-methyl-D-erythritol 2,4-cyclic diphosphate + reduced [flavodoxin]. It functions in the pathway isoprenoid biosynthesis; isopentenyl diphosphate biosynthesis via DXP pathway; isopentenyl diphosphate from 1-deoxy-D-xylulose 5-phosphate: step 5/6. Functionally, converts 2C-methyl-D-erythritol 2,4-cyclodiphosphate (ME-2,4cPP) into 1-hydroxy-2-methyl-2-(E)-butenyl 4-diphosphate. In Salinispora tropica (strain ATCC BAA-916 / DSM 44818 / JCM 13857 / NBRC 105044 / CNB-440), this protein is 4-hydroxy-3-methylbut-2-en-1-yl diphosphate synthase (flavodoxin).